Consider the following 747-residue polypeptide: Elastin (747 aa).

Residues 1 to 26 form the signal peptide; the sequence is MRSLTAAARRPEVLLLLLCILQPSQP. 4-hydroxyproline occurs at positions 34, 65, and 87. Allysine occurs at positions 105 and 109. A 4-hydroxyproline mark is found at Pro165, Pro178, and Pro181. Pro188 bears the Hydroxyproline mark. Pro201 carries the post-translational modification 4-hydroxyproline. An allysine mark is found at Lys252, Lys271, and Lys275. 2 positions are modified to 4-hydroxyproline: Pro298 and Pro302. Allysine occurs at positions 324 and 327. Residues Pro335, Pro365, Pro370, Pro375, Pro380, and Pro385 each carry the 4-hydroxyproline modification. Allysine is present on residues Lys400, Lys404, Lys407, Lys445, and Lys448. 4-hydroxyproline is present on residues Pro462 and Pro478. Lys489 and Lys493 each carry allysine. Pro513 bears the 4-hydroxyproline mark. Allysine is present on residues Lys544, Lys548, and Lys552. 5 positions are modified to 4-hydroxyproline: Pro566, Pro575, Pro584, Pro593, and Pro599. 2 positions are modified to allysine: Lys606 and Lys609. Pro630 carries the 4-hydroxyproline modification. Allysine occurs at positions 645, 649, 685, and 688. 4-hydroxyproline is present on residues Pro719 and Pro733. The cysteines at positions 737 and 742 are disulfide-linked.

Belongs to the elastin family. As to quaternary structure, the polymeric elastin chains are cross-linked together into an extensible 3D network. Forms a ternary complex with BGN and MFAP2. Interacts with MFAP2 via divalent cations (calcium &gt; magnesium &gt; manganese) in a dose-dependent and saturating manner. Interacts with FBLN5 and FBN1. Forms a ternary complex with FBN1 and FBLN2 or FBLN5. Interacts with MFAP4 in a Ca (2+)-dependent manner; this interaction promotes ELN self-assembly. Interacts with EFEMP2 with moderate affinity. In terms of processing, elastin is formed through the cross-linking of its soluble precursor tropoelastin. Cross-linking is initiated through the action of lysyl oxidase on exposed lysines to form allysine. Subsequent spontaneous condensation reactions with other allysine or unmodified lysine residues result in various bi-, tri-, and tetrafunctional cross-links. The most abundant cross-links in mature elastin fibers are lysinonorleucine, allysine aldol, desmosine, and isodesmosine. Hydroxylation on proline residues within the sequence motif, GXPG, is most likely to be 4-hydroxy as this fits the requirement for 4-hydroxylation in vertebrates.

It is found in the secreted. The protein resides in the extracellular space. It localises to the extracellular matrix. Its function is as follows. Major structural protein of tissues such as aorta and nuchal ligament, which must expand rapidly and recover completely. Molecular determinant of the late arterial morphogenesis, stabilizing arterial structure by regulating proliferation and organization of vascular smooth muscle. This is Elastin (ELN) from Bos taurus (Bovine).